A 343-amino-acid polypeptide reads, in one-letter code: MQEILIPLKEKSYKVFLGELPKIELKQKALIISDSIVAGLHLSYLLKRLKALEVRVCVIESGEKYKNFHSLERILNNAFEMQLNRHSLMIALGGGVISDMVGFASSIYFRGIGFINIPTTLLAQVDASVGGKTGINTPYGKNLIGSFYQPKAVYMDLVFLKTLEKREFQAGVAEIIKMAVCFDKNLVETLETKDLKDCLEEVIFQSVNIKAQVVMQDEKEQNIRAGLNYGHTFGHAIEKETDYERFLHGEAIAIGMRMANDLALSLGMLTLKEYERIENLLKKFDLIFHYKITDIQKFYERLFLDKKSENKTIKFILPKGIGAFEIVSHIPKETILKVLEKWH.

NAD(+)-binding positions include Ser61–Lys66, Gly95–Asp99, Thr119–Thr120, Lys132, Lys141, and Phe159–Thr162. Residues Glu174, His231, and His248 each contribute to the Zn(2+) site.

Belongs to the sugar phosphate cyclases superfamily. Dehydroquinate synthase family. The cofactor is Co(2+). Zn(2+) is required as a cofactor. NAD(+) serves as cofactor.

The protein localises to the cytoplasm. The enzyme catalyses 7-phospho-2-dehydro-3-deoxy-D-arabino-heptonate = 3-dehydroquinate + phosphate. It functions in the pathway metabolic intermediate biosynthesis; chorismate biosynthesis; chorismate from D-erythrose 4-phosphate and phosphoenolpyruvate: step 2/7. In terms of biological role, catalyzes the conversion of 3-deoxy-D-arabino-heptulosonate 7-phosphate (DAHP) to dehydroquinate (DHQ). The sequence is that of 3-dehydroquinate synthase from Helicobacter pylori (strain HPAG1).